The sequence spans 823 residues: Endoplasmin homolog (823 aa).

The signal sequence occupies residues M1–G23. The interval N29–V60 is disordered. Residues D39 to G48 are compositionally biased toward basic and acidic residues. Residues E106, N110, D154, M159, N167, K173, S174–G175, Q194–F199, F199, and T246 each bind ATP. A glycan (N-linked (GlcNAc...) asparagine) is linked at N110. Residues E289–T328 are disordered. Residues T290–D321 are compositionally biased toward acidic residues. N-linked (GlcNAc...) asparagine glycans are attached at residues N452 and N620. Residues V777–E792 show a composition bias toward acidic residues. Residues V777 to L823 are disordered. Residues K820–L823 carry the Prevents secretion from ER motif.

This sequence belongs to the heat shock protein 90 family. In terms of assembly, interacts with FKBP42. Interacts with P23-1. In terms of tissue distribution, ubiquitous.

The protein resides in the endoplasmic reticulum lumen. Functionally, may have a molecular chaperone role in the processing of secreted materials. Required for shoot apical meristem (SAM), root apical meristem (RAM) and floral meristem (FM) formation, probably by regulating the folding of CLAVATA proteins (CLVs). Also involved in pollen tube elongation. Involved in resistance to tunicamycin- or high calcium-induced ER stresses. Possesses ATPase activity. The sequence is that of Endoplasmin homolog from Arabidopsis thaliana (Mouse-ear cress).